A 440-amino-acid polypeptide reads, in one-letter code: 3-phosphoshikimate 1-carboxyvinyltransferase (440 aa).

3-phosphoshikimate-binding residues include Lys-28, Ser-29, and Arg-33. A phosphoenolpyruvate-binding site is contributed by Lys-28. The phosphoenolpyruvate site is built by Gly-98 and Arg-126. Positions 171, 173, 318, and 345 each coordinate 3-phosphoshikimate. Residue Gln-173 coordinates phosphoenolpyruvate. Residue Asp-318 is the Proton acceptor of the active site. Residues Arg-349 and Arg-391 each contribute to the phosphoenolpyruvate site.

The protein belongs to the EPSP synthase family. Monomer.

Its subcellular location is the cytoplasm. It carries out the reaction 3-phosphoshikimate + phosphoenolpyruvate = 5-O-(1-carboxyvinyl)-3-phosphoshikimate + phosphate. It functions in the pathway metabolic intermediate biosynthesis; chorismate biosynthesis; chorismate from D-erythrose 4-phosphate and phosphoenolpyruvate: step 6/7. Functionally, catalyzes the transfer of the enolpyruvyl moiety of phosphoenolpyruvate (PEP) to the 5-hydroxyl of shikimate-3-phosphate (S3P) to produce enolpyruvyl shikimate-3-phosphate and inorganic phosphate. The chain is 3-phosphoshikimate 1-carboxyvinyltransferase from Anaeromyxobacter sp. (strain K).